The sequence spans 400 residues: MLNSLDLEGRPQDTRVVVAMSGGVDSSTTAALLKAEGYDVVGITLQLYDHGEAIHRKGACCAGQDIHDARTVAERIGIPHYVLDYESRFRESVIDSFATSYATGETPVPCIECNRSIKFRDLLSTARELGAAVLATGHYVSSRRLPDGSRALVCAADADRDQSYFLFATTREQLDFLRFPLGDMTKPQTRELARSFGLSVADKHDSQDICFVPSGRYSDVVGRLKPNAMEPGDIVDLDGRVLGKHHGIVHFTVGQRRGLGIASHAPLYVLRLEPSTRRVVVGPRAALRMDRILLRDVNWIGDNSLDLAVGDGLEMFVRVRSTRRPQPAWLRAIDGEYQVELIAGEDGVSPGQACVFYDAPEGQARVLGGGFIKSAAPRAANKDARGAAAANRPLAAGVRG.

Residues 19-26 (AMSGGVDS) and Leu-45 contribute to the ATP site. Cys-113 (nucleophile) is an active-site residue. Cys-113 and Cys-210 are disulfide-bonded. Gly-137 is a binding site for ATP. An interaction with tRNA region spans residues 160–162 (RDQ). Residue Cys-210 is the Cysteine persulfide intermediate of the active site.

The protein belongs to the MnmA/TRMU family.

It is found in the cytoplasm. The catalysed reaction is S-sulfanyl-L-cysteinyl-[protein] + uridine(34) in tRNA + AH2 + ATP = 2-thiouridine(34) in tRNA + L-cysteinyl-[protein] + A + AMP + diphosphate + H(+). Its function is as follows. Catalyzes the 2-thiolation of uridine at the wobble position (U34) of tRNA, leading to the formation of s(2)U34. In Rhodopseudomonas palustris (strain BisA53), this protein is tRNA-specific 2-thiouridylase MnmA.